Reading from the N-terminus, the 256-residue chain is Acetyl-coenzyme A carboxylase carboxyl transferase subunit alpha (256 aa).

The CoA carboxyltransferase C-terminal domain maps to 1 to 236 (MSDVARILKE…KTAIVDELAE (236 aa)).

It belongs to the AccA family. Acetyl-CoA carboxylase is a heterohexamer composed of biotin carboxyl carrier protein (AccB), biotin carboxylase (AccC) and two subunits each of ACCase subunit alpha (AccA) and ACCase subunit beta (AccD).

Its subcellular location is the cytoplasm. It carries out the reaction N(6)-carboxybiotinyl-L-lysyl-[protein] + acetyl-CoA = N(6)-biotinyl-L-lysyl-[protein] + malonyl-CoA. The protein operates within lipid metabolism; malonyl-CoA biosynthesis; malonyl-CoA from acetyl-CoA: step 1/1. Its function is as follows. Component of the acetyl coenzyme A carboxylase (ACC) complex. First, biotin carboxylase catalyzes the carboxylation of biotin on its carrier protein (BCCP) and then the CO(2) group is transferred by the carboxyltransferase to acetyl-CoA to form malonyl-CoA. The polypeptide is Acetyl-coenzyme A carboxylase carboxyl transferase subunit alpha (Streptococcus thermophilus (strain ATCC BAA-250 / LMG 18311)).